A 425-amino-acid chain; its full sequence is Histone-binding protein RBBP4 (425 aa).

The residue at position 2 (Ala-2) is an N-acetylalanine. Lys-4 carries the N6-acetyllysine; alternate modification. Lys-4 is covalently cross-linked (Glycyl lysine isopeptide (Lys-Gly) (interchain with G-Cter in SUMO2); alternate). A Glycyl lysine isopeptide (Lys-Gly) (interchain with G-Cter in ubiquitin); alternate cross-link involves residue Lys-4. 7 WD repeats span residues 32–125 (YDLV…NHEG), 126–175 (EVNR…RLRG), 176–223 (HQKE…KTIF), 225–270 (GHTA…HSVD), 271–314 (AHTA…HSFE), 315–371 (SHKD…FIHG), and 372–404 (GHTA…VWQM). The residue at position 110 (Ser-110) is a Phosphoserine. Lys-160 carries the post-translational modification N6-acetyllysine; alternate. A Glycyl lysine isopeptide (Lys-Gly) (interchain with G-Cter in SUMO2); alternate cross-link involves residue Lys-160. The residue at position 355 (Ser-355) is a Phosphoserine.

The protein belongs to the WD repeat RBAP46/RBAP48/MSI1 family. As to quaternary structure, binds directly to helix 1 of the histone fold of histone H4, a region that is not accessible when H4 is in chromatin. Subunit of the chromatin assembly factor 1 (CAF-1) complex, which is composed of RBBP4, CHAF1B and CHAF1A. Subunit of the core histone deacetylase (HDAC) complex, which is composed of HDAC1, HDAC2, RBBP4 and RBBP7. The core HDAC complex associates with SIN3A, ARID4B/SAP180, SAP18, SAP30, SAP130, SUDS3/SAP45 and possibly ARID4A/RBP1 and ING1 to form the SIN3 HDAC complex. Component of the nucleosome remodeling and deacetylase (NuRD) repressor complex, composed of core proteins MTA1, MTA2, MTA3, RBBP4, RBBP7, HDAC1, HDAC2, MBD2, MBD3, and peripherally associated proteins CDK2AP1, CDK2AP2, GATAD2A, GATAD2B, CHD3, CHD4 and CHD5. The exact stoichiometry of the NuRD complex is unknown, and some subunits such as MBD2 and MBD3, GATAD2A and GATAD2B, and CHD3, CHD4 and CHD5 define mutually exclusive NuRD complexes. Interacts with ZNF512B; the interaction is direct and may play a role in repressing gene expression. The NuRD complex may also interact with MBD3L1 and MBD3L2. Component of the PRC2 complex, which consists of the core subunits EED, EZH1 or EZH2, SUZ12, and RBBP4, and various combinations of accessory subunits including AEBP2, JARID2, PHF19, MTF2 and EPOP. Forms a monomeric PRC2.2 (class 2) complex consisting of at least SUZ12, RBBP4, AEBP2 and JARID2. Forms a dimeric PRC2.1 (class 1, PRC-PCL) complex consisting of at least SUZ12, RBBP4, and PHF19; PHF19 stabilizes the dimeric structure which enhances PRC2 interaction with chromatin. Component of the NURF-1 ISWI chromatin remodeling complex (also called the nucleosome-remodeling factor (NURF) complex) at least composed of SMARCA1 (isoform 2), BPTF, RBBP4 and RBBP7. Within the complex interacts with isoform 2 of SMARCA1. Component of the BPFT-SMARCA1 complex at least composed of SMARCA1 (isoform 1), BPFT, RBBP4 and RBBP7; the complex is catalytically inactive and does not remodel chromatin. Within the complex interacts with isoform 1 of SMARCA1. Interacts with the ISWI chromatin remodeling complex component SMARCA5; the interaction is direct. Interacts with the viral protein-binding domain of the retinoblastoma protein (RB1). Component of the DREAM complex (also named LINC complex) at least composed of E2F4, E2F5, LIN9, LIN37, LIN52, LIN54, MYBL1, MYBL2, RBL1, RBL2, RBBP4, TFDP1 and TFDP2. The complex exists in quiescent cells where it represses cell cycle-dependent genes. It dissociates in S phase when LIN9, LIN37, LIN52 and LIN54 form a subcomplex that binds to MYBL2. Found in a complex composed of at least SINHCAF, SIN3A, HDAC1, SAP30, RBBP4, OGT and TET1. Interacts with ZNF827; the interaction is direct and recruits RBBP4 to telomeres. Interacts with MTA1; the interaction is direct and mutually exclusive with binding histone H4. Interacts with ARMC12 (via ARM domains). Interacts with BRCA1. Interacts with CDK2AP1. Interacts with CREBBP, and this interaction may be enhanced by the binding of phosphorylated CREB1 to CREBBP. Interacts with ERCC6. Interacts with HDAC7. Interacts with PHF6. Interacts with PWWP2B. Interacts with SPEN/MINT. Interacts with SUV39H1.

It is found in the nucleus. Its subcellular location is the chromosome. The protein localises to the telomere. Its function is as follows. Core histone-binding subunit that may target chromatin assembly factors, chromatin remodeling factors and histone deacetylases to their histone substrates in a manner that is regulated by nucleosomal DNA. Component of the chromatin assembly factor 1 (CAF-1) complex, which is required for chromatin assembly following DNA replication and DNA repair. Component of the core histone deacetylase (HDAC) complex, which promotes histone deacetylation and consequent transcriptional repression. Component of the nucleosome remodeling and histone deacetylase complex (the NuRD complex), which promotes transcriptional repression by histone deacetylation and nucleosome remodeling. Component of the PRC2 complex, which promotes repression of homeotic genes during development. Component of the NURF (nucleosome remodeling factor) complex. The protein is Histone-binding protein RBBP4 (RBBP4) of Bos taurus (Bovine).